The following is a 946-amino-acid chain: Protein translocase subunit SecA (946 aa).

Residues Gln-87, 105-109 (GEGKT), and Asp-524 each bind ATP. The tract at residues 905–926 (APASDAAQRDPKNPASWGKIGR) is disordered. Zn(2+)-binding residues include Cys-930, Cys-932, Cys-941, and His-942.

It belongs to the SecA family. As to quaternary structure, monomer and homodimer. Part of the essential Sec protein translocation apparatus which comprises SecA, SecYEG and auxiliary proteins SecDF-YajC and YidC. It depends on Zn(2+) as a cofactor.

It is found in the cell inner membrane. It localises to the cytoplasm. The catalysed reaction is ATP + H2O + cellular proteinSide 1 = ADP + phosphate + cellular proteinSide 2.. Functionally, part of the Sec protein translocase complex. Interacts with the SecYEG preprotein conducting channel. Has a central role in coupling the hydrolysis of ATP to the transfer of proteins into and across the cell membrane, serving both as a receptor for the preprotein-SecB complex and as an ATP-driven molecular motor driving the stepwise translocation of polypeptide chains across the membrane. The protein is Protein translocase subunit SecA of Bradyrhizobium diazoefficiens (strain JCM 10833 / BCRC 13528 / IAM 13628 / NBRC 14792 / USDA 110).